The primary structure comprises 464 residues: Tyrosine aminotransferase (464 aa).

The residue at position 284 (Lys-284) is an N6-(pyridoxal phosphate)lysine.

Belongs to the class-I pyridoxal-phosphate-dependent aminotransferase family. Homodimer. Pyridoxal 5'-phosphate serves as cofactor. Expressed in the muscle. Expressed in the hypodermis and intestine.

It carries out the reaction L-tyrosine + 2-oxoglutarate = 3-(4-hydroxyphenyl)pyruvate + L-glutamate. The enzyme catalyses 3-hydroxy-L-phenylalanine + 2-oxoglutarate = 3-(3-hydroxyphenyl)pyruvate + L-glutamate. It participates in amino-acid degradation; L-phenylalanine degradation; acetoacetate and fumarate from L-phenylalanine: step 2/6. Functionally, transaminase involved in tyrosine breakdown. Converts tyrosine to p-hydroxyphenylpyruvate. Has no transaminase activity towards phenylalanine. Plays protective role against oxidative stress, metabolizing meta-tyrosine and negatively regulating its accumulation. Plays a role in modulating the daf-2/insulin receptor-like transduction pathway through regulating tyrosine levels. Negatively regulates dauer formation. Plays a role in longevity. This Caenorhabditis elegans protein is Tyrosine aminotransferase.